Consider the following 302-residue polypeptide: Probable 2-(5''-triphosphoribosyl)-3'-dephosphocoenzyme-A synthase 1 (302 aa).

Belongs to the CitG/MdcB family.

The enzyme catalyses 3'-dephospho-CoA + ATP = 2'-(5''-triphospho-alpha-D-ribosyl)-3'-dephospho-CoA + adenine. In Salmonella typhi, this protein is Probable 2-(5''-triphosphoribosyl)-3'-dephosphocoenzyme-A synthase 1.